The primary structure comprises 429 residues: Ribosomal RNA small subunit methyltransferase B (429 aa).

S-adenosyl-L-methionine-binding positions include 254–260 (CAAPGGK), Asp-277, Asp-303, and Asp-322. The Nucleophile role is filled by Cys-375. Positions 397 to 419 (ALSETGTPDQPGQQNLPGGEEGD) are disordered. Residues 400–412 (ETGTPDQPGQQNL) are compositionally biased toward polar residues.

It belongs to the class I-like SAM-binding methyltransferase superfamily. RsmB/NOP family.

Its subcellular location is the cytoplasm. It catalyses the reaction cytidine(967) in 16S rRNA + S-adenosyl-L-methionine = 5-methylcytidine(967) in 16S rRNA + S-adenosyl-L-homocysteine + H(+). Specifically methylates the cytosine at position 967 (m5C967) of 16S rRNA. The protein is Ribosomal RNA small subunit methyltransferase B of Salmonella choleraesuis (strain SC-B67).